The primary structure comprises 161 residues: Nucleotide-binding protein mma_0840 (161 aa).

The protein belongs to the YajQ family.

In terms of biological role, nucleotide-binding protein. The polypeptide is Nucleotide-binding protein mma_0840 (Janthinobacterium sp. (strain Marseille) (Minibacterium massiliensis)).